The following is a 556-amino-acid chain: 2-succinyl-5-enolpyruvyl-6-hydroxy-3-cyclohexene-1-carboxylate synthase (556 aa).

It belongs to the TPP enzyme family. MenD subfamily. As to quaternary structure, homodimer. Requires Mg(2+) as cofactor. The cofactor is Mn(2+). Thiamine diphosphate serves as cofactor.

The enzyme catalyses isochorismate + 2-oxoglutarate + H(+) = 5-enolpyruvoyl-6-hydroxy-2-succinyl-cyclohex-3-ene-1-carboxylate + CO2. The protein operates within quinol/quinone metabolism; 1,4-dihydroxy-2-naphthoate biosynthesis; 1,4-dihydroxy-2-naphthoate from chorismate: step 2/7. It participates in quinol/quinone metabolism; menaquinone biosynthesis. Functionally, catalyzes the thiamine diphosphate-dependent decarboxylation of 2-oxoglutarate and the subsequent addition of the resulting succinic semialdehyde-thiamine pyrophosphate anion to isochorismate to yield 2-succinyl-5-enolpyruvyl-6-hydroxy-3-cyclohexene-1-carboxylate (SEPHCHC). This is 2-succinyl-5-enolpyruvyl-6-hydroxy-3-cyclohexene-1-carboxylate synthase from Escherichia coli O45:K1 (strain S88 / ExPEC).